Reading from the N-terminus, the 354-residue chain is tRNA N6-adenosine threonylcarbamoyltransferase (354 aa).

Histidine 115 and histidine 119 together coordinate Fe cation. Residues leucine 138–glycine 142, aspartate 171, glycine 184, and asparagine 285 contribute to the substrate site. Aspartate 313 contributes to the Fe cation binding site.

It belongs to the KAE1 / TsaD family. Fe(2+) is required as a cofactor.

The protein resides in the cytoplasm. It carries out the reaction L-threonylcarbamoyladenylate + adenosine(37) in tRNA = N(6)-L-threonylcarbamoyladenosine(37) in tRNA + AMP + H(+). Required for the formation of a threonylcarbamoyl group on adenosine at position 37 (t(6)A37) in tRNAs that read codons beginning with adenine. Is involved in the transfer of the threonylcarbamoyl moiety of threonylcarbamoyl-AMP (TC-AMP) to the N6 group of A37, together with TsaE and TsaB. TsaD likely plays a direct catalytic role in this reaction. This Albidiferax ferrireducens (strain ATCC BAA-621 / DSM 15236 / T118) (Rhodoferax ferrireducens) protein is tRNA N6-adenosine threonylcarbamoyltransferase.